The chain runs to 949 residues: Copper-transporting ATPase PAA1, chloroplastic (949 aa).

The N-terminal 103 residues, 1–103 (MESTLSAFST…SSSPSFRSIS (103 aa)), are a transit peptide targeting the chloroplast. Positions 113–126 (YNGGSGGGGGGGSE) are enriched in gly residues. The tract at residues 113 to 142 (YNGGSGGGGGGGSESGDSKSKLGANASDGV) is disordered. Residues 148-222 (DIIILDVGGM…HLTNCGFQST (75 aa)) enclose the HMA domain. Cu(+) is bound by residues Cys-159 and Cys-162. 6 helical membrane-spanning segments follow: residues 253–274 (LAVS…FLGV), 287–306 (FHVS…LVLD), 314–334 (GSPN…SVSS), 349–369 (EEPV…QRAK), 502–524 (VAGR…WNLF), and 543–560 (LQLS…ALGL). Asp-598 serves as the catalytic 4-aspartylphosphate intermediate. Position 807 to 814 (807 to 814 (GDGINDAA)) interacts with ATP. The Mg(2+) site is built by Asp-808 and Asp-812. A run of 2 helical transmembrane segments spans residues 863–882 (KQNL…IAAG) and 895–913 (SMAG…TNSL). Residues 925–949 (DKNVKPEPKEGTKQPHENTRWKQSS) are disordered.

It belongs to the cation transport ATPase (P-type) (TC 3.A.3) family. Type IB subfamily. In terms of tissue distribution, expressed in the shoots and roots.

It localises to the plastid. The protein resides in the chloroplast membrane. The enzyme catalyses Cu(+)(in) + ATP + H2O = Cu(+)(out) + ADP + phosphate + H(+). Mediates copper transfer across the plastid envelope. Required for the delivery of copper into the plastid stroma, which is essential for the function of copper proteins. Seems to be selective for monovalent copper Cu(+) transport. Also plays a role in glucose signaling-mediated cell proliferation of root meristem in non-green tissues. This chain is Copper-transporting ATPase PAA1, chloroplastic (PAA1), found in Arabidopsis thaliana (Mouse-ear cress).